A 125-amino-acid polypeptide reads, in one-letter code: Mediator of RNA polymerase II transcription subunit 11 (125 aa).

The protein belongs to the Mediator complex subunit 11 family. As to quaternary structure, component of the Mediator complex.

The protein localises to the nucleus. Functionally, component of the Mediator complex, a coactivator involved in the regulated transcription of nearly all RNA polymerase II-dependent genes. Mediator functions as a bridge to convey information from gene-specific regulatory proteins to the basal RNA polymerase II transcription machinery. Mediator is recruited to promoters by direct interactions with regulatory proteins and serves as a scaffold for the assembly of a functional pre-initiation complex with RNA polymerase II and the general transcription factors. The polypeptide is Mediator of RNA polymerase II transcription subunit 11 (MED11) (Candida glabrata (strain ATCC 2001 / BCRC 20586 / JCM 3761 / NBRC 0622 / NRRL Y-65 / CBS 138) (Yeast)).